The chain runs to 453 residues: uncharacterized protein (453 aa).

Residues 1 to 23 form the signal peptide; the sequence is MFLLQRFFIYGLFLACFYTTVFG. Over 24–137 the chain is Lumenal; the sequence is EKHFEAEEYR…EKQFSYSSGT (114 aa). Residues 138–158 form a helical membrane-spanning segment; it reads NGILATFLTAIPPNIFILLVP. The Cytoplasmic portion of the chain corresponds to 159-165; that stretch reads KSFDTSM. The chain crosses the membrane as a helical span at residues 166–186; that stretch reads LNLFVAVSAGSLLGDVFLQLL. Residues 187–194 lie on the Lumenal side of the membrane; the sequence is PTVYSTNG. Residues 195–215 traverse the membrane as a helical segment; that stretch reads GDFPASSVYSILIGALVFFLM. Topologically, residues 216 to 358 are cytoplasmic; it reads DKGIRILIHE…LRNGYTKSQV (143 aa). Residues 229–238 show a composition bias toward basic and acidic residues; that stretch reads SLSKPKKDGE. Residues 229-278 are disordered; that stretch reads SLSKPKKDGEETSSVNKPSASSTQTDVKGVEGLRKRNVKDDQNSKGHEPD. The segment covering 240-254 has biased composition (polar residues); sequence TSSVNKPSASSTQTD. Residues 256–278 are compositionally biased toward basic and acidic residues; the sequence is KGVEGLRKRNVKDDQNSKGHEPD. The chain crosses the membrane as a helical span at residues 359–379; the sequence is LVLQMITMVTGLLGAIVATYI. Residues 380–399 lie on the Lumenal side of the membrane; sequence YTASSSSSPYGSFLLQLEDK. The helical transmembrane segment at 400–420 threads the bilayer; sequence LLPFTAGGFLYIAYLGVFPEL. The Cytoplasmic portion of the chain corresponds to 421 to 432; sequence LEINLSKGKLGN. A helical membrane pass occupies residues 433–453; that stretch reads MIYTALYMMFIVGGFSFLYYV.

Belongs to the ZIP transporter (TC 2.A.5) family. KE4/Catsup subfamily.

The protein localises to the endoplasmic reticulum membrane. This is an uncharacterized protein from Schizosaccharomyces pombe (strain 972 / ATCC 24843) (Fission yeast).